We begin with the raw amino-acid sequence, 203 residues long: FMN-dependent NADH:quinone oxidoreductase (203 aa).

Residues Ser9, 15 to 17, and 138 to 141 each bind FMN; these read SVS and SRGG.

The protein belongs to the azoreductase type 1 family. As to quaternary structure, homodimer. It depends on FMN as a cofactor.

It catalyses the reaction 2 a quinone + NADH + H(+) = 2 a 1,4-benzosemiquinone + NAD(+). It carries out the reaction N,N-dimethyl-1,4-phenylenediamine + anthranilate + 2 NAD(+) = 2-(4-dimethylaminophenyl)diazenylbenzoate + 2 NADH + 2 H(+). Its function is as follows. Quinone reductase that provides resistance to thiol-specific stress caused by electrophilic quinones. In terms of biological role, also exhibits azoreductase activity. Catalyzes the reductive cleavage of the azo bond in aromatic azo compounds to the corresponding amines. The polypeptide is FMN-dependent NADH:quinone oxidoreductase (Methylorubrum populi (strain ATCC BAA-705 / NCIMB 13946 / BJ001) (Methylobacterium populi)).